A 381-amino-acid polypeptide reads, in one-letter code: L-lactate dehydrogenase (381 aa).

Positions 1–380 (MIISSASDYR…KPEALVDLSK (380 aa)) constitute an FMN hydroxy acid dehydrogenase domain. A substrate-binding site is contributed by Tyr24. Residues Ser106 and Gln127 each contribute to the FMN site. Tyr129 is a binding site for substrate. Thr155 serves as a coordination point for FMN. Arg164 is a binding site for substrate. Lys251 contributes to the FMN binding site. His275 serves as the catalytic Proton acceptor. Arg278 lines the substrate pocket. Position 306–330 (306–330 (DSGIRNGLDIVRMLALGADATMLGR)) interacts with FMN.

Belongs to the FMN-dependent alpha-hydroxy acid dehydrogenase family. Requires FMN as cofactor.

The protein resides in the cell inner membrane. The catalysed reaction is (S)-lactate + A = pyruvate + AH2. In terms of biological role, catalyzes the conversion of L-lactate to pyruvate. Is coupled to the respiratory chain. The polypeptide is L-lactate dehydrogenase (Haemophilus influenzae (strain 86-028NP)).